The chain runs to 374 residues: Regulator of G-protein signaling 20 (374 aa).

Polar residues predominate over residues 1 to 11 (MPRLSQDNQQG). 2 disordered regions span residues 1–21 (MPRL…RPSR) and 135–158 (PPGG…PPMG). Residues 12–21 (HQKHFSRPSR) are compositionally biased toward basic residues. The RGS domain occupies 248 to 364 (SFDKLMLTPA…MNSALYKDLL (117 aa)).

Forms a complex with G(alpha)z/i2 subunits and mu-opioid receptors; the formation of this complex results in mu-opioid receptor desensitization. Interacts with OPRM1. In terms of processing, fatty acylated. Heavily palmitoylated in the cysteine string motif. Post-translationally, N- and O-glycosylated in synapsomal membranes. Serine phosphorylated in synapsomal membranes. In terms of processing, sumoylated with SUMO1 and SUMO2 in synaptosomes. The sumoylated forms act as a scaffold for sequestering mu-opioid receptor-activated G(alpha) subunits. As to expression, retinal-specific. Expressed throughout the retina, including photoreceptors.

It is found in the membrane. It localises to the nucleus. Its subcellular location is the cytoplasm. Functionally, inhibits signal transduction by increasing the GTPase activity of G protein alpha subunits thereby driving them into their inactive GDP-bound form. Binds selectively to G(z)-alpha and G(alpha)-i2 subunits, accelerates their GTPase activity and regulates their signaling activities. The G(z)-alpha activity is inhibited by the phosphorylation and palmitoylation of the G-protein. Negatively regulates mu-opioid receptor-mediated activation of the G-proteins. This Bos taurus (Bovine) protein is Regulator of G-protein signaling 20 (RGS20).